A 417-amino-acid polypeptide reads, in one-letter code: Gamma-glutamyl phosphate reductase (417 aa).

It belongs to the gamma-glutamyl phosphate reductase family.

It is found in the cytoplasm. The enzyme catalyses L-glutamate 5-semialdehyde + phosphate + NADP(+) = L-glutamyl 5-phosphate + NADPH + H(+). It participates in amino-acid biosynthesis; L-proline biosynthesis; L-glutamate 5-semialdehyde from L-glutamate: step 2/2. Catalyzes the NADPH-dependent reduction of L-glutamate 5-phosphate into L-glutamate 5-semialdehyde and phosphate. The product spontaneously undergoes cyclization to form 1-pyrroline-5-carboxylate. The protein is Gamma-glutamyl phosphate reductase of Klebsiella pneumoniae (strain 342).